The chain runs to 143 residues: Large ribosomal subunit protein uL11 (143 aa).

The protein belongs to the universal ribosomal protein uL11 family. As to quaternary structure, part of the ribosomal stalk of the 50S ribosomal subunit. Interacts with L10 and the large rRNA to form the base of the stalk. L10 forms an elongated spine to which L12 dimers bind in a sequential fashion forming a multimeric L10(L12)X complex. In terms of processing, one or more lysine residues are methylated.

Functionally, forms part of the ribosomal stalk which helps the ribosome interact with GTP-bound translation factors. This is Large ribosomal subunit protein uL11 from Caulobacter vibrioides (strain ATCC 19089 / CIP 103742 / CB 15) (Caulobacter crescentus).